Here is a 556-residue protein sequence, read N- to C-terminus: 2-isopropylmalate synthase (556 aa).

Residues 33–307 form the Pyruvate carboxyltransferase domain; that stretch reads PIWCSSDLRD…NPGLDFSDID (275 aa). Mg(2+)-binding residues include Asp-42, His-246, His-248, and Asn-282. The regulatory domain stretch occupies residues 439-556; it reads ANVPYALISH…SLSQTQAKAA (118 aa).

It belongs to the alpha-IPM synthase/homocitrate synthase family. LeuA type 2 subfamily. Homodimer. It depends on Mg(2+) as a cofactor.

The protein localises to the cytoplasm. The catalysed reaction is 3-methyl-2-oxobutanoate + acetyl-CoA + H2O = (2S)-2-isopropylmalate + CoA + H(+). It participates in amino-acid biosynthesis; L-leucine biosynthesis; L-leucine from 3-methyl-2-oxobutanoate: step 1/4. Functionally, catalyzes the condensation of the acetyl group of acetyl-CoA with 3-methyl-2-oxobutanoate (2-ketoisovalerate) to form 3-carboxy-3-hydroxy-4-methylpentanoate (2-isopropylmalate). The protein is 2-isopropylmalate synthase of Pseudomonas syringae pv. syringae (strain B728a).